The following is a 200-amino-acid chain: LexA repressor (200 aa).

The H-T-H motif DNA-binding region spans 28–48 (RAEIAQHFGFSSPNAAEQHLK). Residues Ser-117 and Lys-154 each act as for autocatalytic cleavage activity in the active site.

Belongs to the peptidase S24 family. In terms of assembly, homodimer.

It catalyses the reaction Hydrolysis of Ala-|-Gly bond in repressor LexA.. Represses a number of genes involved in the response to DNA damage (SOS response), including recA and lexA. In the presence of single-stranded DNA, RecA interacts with LexA causing an autocatalytic cleavage which disrupts the DNA-binding part of LexA, leading to derepression of the SOS regulon and eventually DNA repair. This is LexA repressor from Thiobacillus denitrificans (strain ATCC 25259 / T1).